Here is a 901-residue protein sequence, read N- to C-terminus: MLIPSKLSRPVRLDHTVVRERLLAKLSGANNFRLALITSPAGYGKTTLISQWAAGKNDIGWYSLDEGDNQQERFASYLIATVQQATNGHCAICETMAQKRQYASLTSLFAQLFIELAEWHSPLYLVIDDYHLITNPVIHESMRFFIRHQPENLTLVVLSRNLPQLGIANLRVRDQLLEIGSQQLAFTHQEAKQFFDCRLSSPIEAAESSRICDDVSGWATALQLIALSARQNTHSAHKSARRLAGINASHLSDYLVDEVLDNVDLATRHFLLKSAILRSMNDALITRVTGEENGQMRLEEIERQGLFLQRMDDTGEWFCYHPLFGNFLRQRCQWELAAELPEIHRAAAESWMAQGFPSEAIHHALAAGDALMLRDILLNHAWSLFNHSELSLLEESLKALPWDSLLENPQLVLLQAWLMQSQHRYGEVNTLLARAEHEIKDIREGTMHAEFNALRAQVAINDGNPDEAERLAKLALEELPPGWFYSRIVATSVLGEVLHCKGELTRSLALMQQTEQMARQHDVWHYALWSLIQQSEILFAQGFLQTAWETQEKAFQLINEQHLEQLPMHEFLVRIRAQLLWAWARLDEAEASARSGIEVLSSYQPQQQLQCLAMLIQCSLARGDLDNARSQLNRLENLLGNGKYHSDWISNANKVRVIYWQMTGDKAAAANWLRHTAKPEFANNHFLQGQWRNIARAQILLGEFEPAEIVLEELNENARSLRLMSDLNRNLLLLNQLYWQAGRKSDAQRVLLDALKLANRTGFISHFVIEGEAMAQQLRQLIQLNTLPELEQHRAQRILREINQHHRHKFAHFDENFVERLLNHPEVPELIRTSPLTQREWQVLGLIYSGYSNEQIAGELEVAATTIKTHIRNLYQKLGVAHRQAAVQHAQKLLKMMGYGV.

ATP is bound at residue 39-46 (SPAGYGKT). An HTH luxR-type domain is found at 829 to 894 (ELIRTSPLTQ…AAVQHAQKLL (66 aa)). A DNA-binding region (H-T-H motif) is located at residues 853-872 (NEQIAGELEVAATTIKTHIR).

This sequence belongs to the MalT family. Monomer in solution. Oligomerizes to an active state in the presence of the positive effectors ATP and maltotriose.

Its activity is regulated as follows. Activated by ATP and maltotriose, which are both required for DNA binding. Positively regulates the transcription of the maltose regulon whose gene products are responsible for uptake and catabolism of malto-oligosaccharides. Specifically binds to the promoter region of its target genes, recognizing a short DNA motif called the MalT box. The chain is HTH-type transcriptional regulator MalT from Shigella boydii serotype 4 (strain Sb227).